The sequence spans 202 residues: FMN-dependent NADH:quinone oxidoreductase (202 aa).

FMN contacts are provided by residues serine 10 and 95-98; that span reads MYNF.

It belongs to the azoreductase type 1 family. Homodimer. FMN serves as cofactor.

It carries out the reaction 2 a quinone + NADH + H(+) = 2 a 1,4-benzosemiquinone + NAD(+). It catalyses the reaction N,N-dimethyl-1,4-phenylenediamine + anthranilate + 2 NAD(+) = 2-(4-dimethylaminophenyl)diazenylbenzoate + 2 NADH + 2 H(+). Functionally, quinone reductase that provides resistance to thiol-specific stress caused by electrophilic quinones. Its function is as follows. Also exhibits azoreductase activity. Catalyzes the reductive cleavage of the azo bond in aromatic azo compounds to the corresponding amines. The sequence is that of FMN-dependent NADH:quinone oxidoreductase from Alkalilimnicola ehrlichii (strain ATCC BAA-1101 / DSM 17681 / MLHE-1).